A 469-amino-acid chain; its full sequence is 6-phosphogluconate dehydrogenase, NADP(+)-dependent, decarboxylating (469 aa).

NADP(+)-binding positions include 10 to 15 (GLAVMG), 33 to 35 (NRS), 74 to 76 (VKA), and N102. Substrate-binding positions include N102 and 128 to 130 (SGG). The active-site Proton acceptor is the K182. Residue 185–186 (HN) coordinates substrate. Catalysis depends on E189, which acts as the Proton donor. Substrate contacts are provided by Y190, K260, R287, R446, and H452.

This sequence belongs to the 6-phosphogluconate dehydrogenase family. As to quaternary structure, homodimer.

The catalysed reaction is 6-phospho-D-gluconate + NADP(+) = D-ribulose 5-phosphate + CO2 + NADPH. The protein operates within carbohydrate degradation; pentose phosphate pathway; D-ribulose 5-phosphate from D-glucose 6-phosphate (oxidative stage): step 3/3. Functionally, catalyzes the oxidative decarboxylation of 6-phosphogluconate to ribulose 5-phosphate and CO(2), with concomitant reduction of NADP to NADPH. Is the predominant 6-P-gluconate dehydrogenase isoenzyme in B.subtilis during growth on glucose and gluconate. The protein is 6-phosphogluconate dehydrogenase, NADP(+)-dependent, decarboxylating (gndA) of Bacillus subtilis (strain 168).